An 848-amino-acid chain; its full sequence is MAEVTVKQLAADVGAPVDRLLKQIVEAGLKARSENDAVTSDEKQQLLAYLRKNHGEAEAEPRKITLKRKTTTTLKAGKAKTVNVEVRKRRTYIKRAELQPEPEAEAPAPEEPVQAPAAEQAPVEEAPKVAAEAAPAEAPETEAPAAAETEAKAAPEPAAESAEPAIAPEDIPMPPPEDEGRDRKPKKKKEKVRERGDDIEEGKPKKKQAGHRGPRSRPVEEPVVLSEDEEETTLRKPLRAKKKPKEKRHAFERPTKPMVREVQIPETITVGDLAQRMAVKSADVIKTLMGMGVMATINQALDQETAILVTEELGHKPKAVSEDAFEEEVLSEITGPDEGKEKIKRAPVVSVMGHVDHGKTSLLDHIRRAKVAAGESGGITQHIGAYHVETEHGMVSFLDTPGHAAFTAMRARGAQCTDIVILVVAADDGVMPQTKEAVEHARSAGVPIVVAINKMDKEEADPDRIKNELSALEVIPEDWGGDVQFVPVSAHTGMGIDDLLEAVLLQAEILELEASPDAAAKGVVVESSLERGRGSVATVLVQNGTLRQGDMVVAGSFFGKVRAMTDEAGRQVKEAGPSIPVEILGLNGTPDAGDEFFAVADEKKAKELAEFRQTREREQRLQRQQAAKLENMFENMGKDEVKTLNVVLKTDVRGSLEAITKALQDLGNDEVQVKIVSSGVGGIAETDVSLAMATNAVIFGFNVRADTASKRLVEQEGLDLRYYSIIYNLIDDVKAALTGMLKPEFREDIVGIADVRDVFRSPKFGQVAGCMVTEGTVYRNKPIRVLRDNVVIFEGELESLRRFKDDVAEVRNGMECGIGVKGYDVKVGDQIEVFDRVRVERQLESTGA.

The segment at 90–253 (RTYIKRAELQ…PKEKRHAFER (164 aa)) is disordered. A compositionally biased stretch (low complexity) spans 105–170 (EAPAPEEPVQ…SAEPAIAPED (66 aa)). Basic residues-rich tracts occupy residues 204–215 (PKKKQAGHRGPR) and 236–248 (KPLRAKKKPKEKR). A tr-type G domain is found at 344-511 (KRAPVVSVMG…AVLLQAEILE (168 aa)). The G1 stretch occupies residues 353-360 (GHVDHGKT). 353–360 (GHVDHGKT) provides a ligand contact to GTP. Residues 378 to 382 (GITQH) form a G2 region. The G3 stretch occupies residues 399 to 402 (DTPG). GTP contacts are provided by residues 399-403 (DTPGH) and 453-456 (NKMD). The G4 stretch occupies residues 453–456 (NKMD). A G5 region spans residues 489-491 (SAH).

It belongs to the TRAFAC class translation factor GTPase superfamily. Classic translation factor GTPase family. IF-2 subfamily.

Its subcellular location is the cytoplasm. In terms of biological role, one of the essential components for the initiation of protein synthesis. Protects formylmethionyl-tRNA from spontaneous hydrolysis and promotes its binding to the 30S ribosomal subunits. Also involved in the hydrolysis of GTP during the formation of the 70S ribosomal complex. The polypeptide is Translation initiation factor IF-2 (Marinobacter nauticus (strain ATCC 700491 / DSM 11845 / VT8) (Marinobacter aquaeolei)).